Here is a 518-residue protein sequence, read N- to C-terminus: Anthranilate synthase component 1 (518 aa).

Residues S41 and 291–293 contribute to the L-tryptophan site; that span reads PYM. Chorismate is bound at residue 328 to 329; sequence GS. Residue E361 participates in Mg(2+) binding. Chorismate-binding positions include Y449, R469, 483-485, and G485; that span reads GCG. E498 lines the Mg(2+) pocket.

Belongs to the anthranilate synthase component I family. As to quaternary structure, heterotetramer consisting of two non-identical subunits: a beta subunit (TrpG) and a large alpha subunit (TrpE). Requires Mg(2+) as cofactor.

It carries out the reaction chorismate + L-glutamine = anthranilate + pyruvate + L-glutamate + H(+). The protein operates within amino-acid biosynthesis; L-tryptophan biosynthesis; L-tryptophan from chorismate: step 1/5. With respect to regulation, feedback inhibited by tryptophan. Part of a heterotetrameric complex that catalyzes the two-step biosynthesis of anthranilate, an intermediate in the biosynthesis of L-tryptophan. In the first step, the glutamine-binding beta subunit (TrpG) of anthranilate synthase (AS) provides the glutamine amidotransferase activity which generates ammonia as a substrate that, along with chorismate, is used in the second step, catalyzed by the large alpha subunit of AS (TrpE) to produce anthranilate. In the absence of TrpG, TrpE can synthesize anthranilate directly from chorismate and high concentrations of ammonia. The sequence is that of Anthranilate synthase component 1 (trpE) from Haemophilus influenzae (strain ATCC 51907 / DSM 11121 / KW20 / Rd).